The primary structure comprises 787 residues: Protein smoothened (787 aa).

Residues 1–27 (MAAARPARGPELPLLGLLLLLLLGDPG) form the signal peptide. Residues 28–233 (RGAASSGNAT…EAEHQDMHSY (206 aa)) are Extracellular-facing. The tract at residues 30-60 (AASSGNATGPGPRSAGGSARRSAAVTGPPPP) is disordered. The N-linked (GlcNAc...) asparagine glycan is linked to asparagine 35. Residues 38–53 (GPGPRSAGGSARRSAA) show a composition bias toward low complexity. Disulfide bonds link cysteine 64/cysteine 178, cysteine 70/cysteine 134, cysteine 78/cysteine 127, cysteine 118/cysteine 154, and cysteine 147/cysteine 169. The 117-residue stretch at 65-181 (GRAAPCEPLR…DRFPEGCTNE (117 aa)) folds into the FZ domain. A cholesterol-binding site is contributed by aspartate 95. An N-linked (GlcNAc...) asparagine glycan is attached at asparagine 188. Cystine bridges form between cysteine 193-cysteine 213 and cysteine 217-cysteine 295. Residues 234 to 254 (IAAFGAVTGLCTLFTLATFVA) form a helical membrane-spanning segment. Residues 255–262 (DWRNSNRY) lie on the Cytoplasmic side of the membrane. Residues 263–283 (PAVILFYVNACFFVGSIGWLA) traverse the membrane as a helical segment. At 284 to 314 (QFMDGARREIVCRADGTMRLGEPTSNETLSC) the chain is on the extracellular side. A glycan (N-linked (GlcNAc...) asparagine) is linked at asparagine 309. Cysteine 314 and cysteine 390 are oxidised to a cystine. The helical transmembrane segment at 315-335 (VIIFVIVYYALMAGVVWFVVL) threads the bilayer. Residues 336–358 (TYAWHTSFKALGTTYQPLSGKTS) lie on the Cytoplasmic side of the membrane. The helical transmembrane segment at 359 to 379 (YFHLLTWSLPFVLTVAILAVA) threads the bilayer. The Extracellular portion of the chain corresponds to 380-402 (QVDGDSVSGICFVGYKNYRYRAG). Cholesterol is bound at residue tyrosine 394. The chain crosses the membrane as a helical span at residues 403 to 423 (FVLAPIGLVLIVGGYFLIRGV). Residues 424–451 (MTLFSIKSNHPGLLSEKAASKINETMLR) are Cytoplasmic-facing. Residues 452 to 472 (LGIFGFLAFGFVLITFSCHFY) traverse the membrane as a helical segment. Over 473 to 524 (DFFNQAEWERSFRDYVLCQANVTIGLPTKQPIPDCEIKNRPSLLVEKINLFA) the chain is Extracellular. A disulfide bridge connects residues cysteine 490 and cysteine 507. The chain crosses the membrane as a helical span at residues 525–545 (MFGTGIAMSTWVWTKATLLIW). The segment at 538-569 (TKATLLIWRRTWCRLTGQSDDEPKRIKKSKMI) is interaction with BBS5 and BBS7. The Cytoplasmic portion of the chain corresponds to 546–787 (RRTWCRLTGQ…TELMDADSDF (242 aa)). Phosphoserine occurs at positions 556, 574, and 590. A required for interaction with PRKACA region spans residues 570–653 (AKAFSKRHEL…TPVPPEEQAN (84 aa)). The tract at residues 581–593 (QNPGQELSFSMHT) is interaction with DLG5. Threonine 593 carries the post-translational modification Phosphothreonine. A phosphoserine mark is found at serine 595 and serine 638. Phosphothreonine occurs at positions 640 and 644. The residue at position 662 (serine 662) is a Phosphoserine. The segment at 667–704 (KRLGRKKKRRKRKKEVCPLAPPPELHPPAPAPSTIPRL) is disordered. Over residues 668 to 680 (RLGRKKKRRKRKK) the composition is skewed to basic residues. The span at 685–699 (LAPPPELHPPAPAPS) shows a compositional bias: pro residues.

The protein belongs to the G-protein coupled receptor Fz/Smo family. Homodimer. Interacts (via C-terminus) with protein kinase A catalytic subunit PRKACA; interacts with free PRKACA subunits and the interaction leads to sequestration of PRKACA at the membrane, preventing PRKACA-mediated phosphorylation of GLI transcription factors. Interacts with ARRB2. Interacts with KIF7. Interacts with BBS5 and BBS7; the interactions are indicative for the association of SMO with the BBsome complex to facilitate ciliary localization of SMO. Interacts with DLG5 and SDCBP. Interacts with GAS8/DRC4. Phosphorylation by GRK kinases is required for interaction with protein kinase A catalytic subunit PRKACA.

The protein resides in the cell membrane. Its subcellular location is the cell projection. It localises to the cilium. G protein-coupled receptor which associates with the patched protein (PTCH) to transduce hedgehog protein signaling. Binding of sonic hedgehog (SHH) to its receptor patched prevents inhibition of smoothened (SMO) by patched. When active, SMO binds to and sequesters protein kinase A catalytic subunit PRKACA at the cell membrane, preventing PRKACA-mediated phosphorylation of GLI transcription factors which releases the GLI proteins from PRKACA-mediated inhibition and allows for transcriptional activation of hedgehog pathway target genes. Required for the accumulation of KIF7, GLI2 and GLI3 in the cilia. Interacts with DLG5 at the ciliary base to induce the accumulation of KIF7 and GLI2 at the ciliary tip for GLI2 activation. This Homo sapiens (Human) protein is Protein smoothened (SMO).